Consider the following 230-residue polypeptide: Thioredoxin domain-containing protein PLP3B (230 aa).

The 85-residue stretch at Val89–Phe173 folds into the Thioredoxin domain. Residues Glu199–Asp230 are disordered. A compositionally biased stretch (polar residues) spans Arg220 to Asp230.

It belongs to the phosducin family. In terms of assembly, interacts with TUBB2, TUBB3, TUBB4 and TUBB5. Expressed in roots, cotyledons, leaves, stems and flowers.

The protein resides in the cytoplasm. Its subcellular location is the nucleus. In terms of biological role, tubulin-binding protein involved in microtubule formation. This Arabidopsis thaliana (Mouse-ear cress) protein is Thioredoxin domain-containing protein PLP3B (PLP3B).